Reading from the N-terminus, the 732-residue chain is Catalase-peroxidase (732 aa).

Positions 1-11 are enriched in basic and acidic residues; the sequence is MDAKTDDKDGG. The tract at residues 1–24 is disordered; the sequence is MDAKTDDKDGGKCPFPHGGGRGRR. Residues 97–219 constitute a cross-link (tryptophyl-tyrosyl-methioninium (Trp-Tyr) (with M-245)); sequence WHSAGTYRTT…LGAVQMGLIY (123 aa). H98 serves as the catalytic Proton acceptor. A cross-link (tryptophyl-tyrosyl-methioninium (Tyr-Met) (with W-97)) is located at residues 219–245; it reads YVNPEGPNGNPDPVAAAKDIRETFARM. Residue H260 participates in heme b binding.

It belongs to the peroxidase family. Peroxidase/catalase subfamily. Homodimer or homotetramer. Heme b is required as a cofactor. Formation of the three residue Trp-Tyr-Met cross-link is important for the catalase, but not the peroxidase activity of the enzyme.

The enzyme catalyses H2O2 + AH2 = A + 2 H2O. It catalyses the reaction 2 H2O2 = O2 + 2 H2O. Its function is as follows. Bifunctional enzyme with both catalase and broad-spectrum peroxidase activity. In Rhodopseudomonas palustris (strain HaA2), this protein is Catalase-peroxidase.